A 207-amino-acid polypeptide reads, in one-letter code: Uridine kinase (207 aa).

Position 11–18 (11–18) interacts with ATP; that stretch reads GGSGSGKT.

The protein belongs to the uridine kinase family.

It localises to the cytoplasm. The enzyme catalyses uridine + ATP = UMP + ADP + H(+). The catalysed reaction is cytidine + ATP = CMP + ADP + H(+). It functions in the pathway pyrimidine metabolism; CTP biosynthesis via salvage pathway; CTP from cytidine: step 1/3. The protein operates within pyrimidine metabolism; UMP biosynthesis via salvage pathway; UMP from uridine: step 1/1. In Staphylococcus aureus (strain Mu3 / ATCC 700698), this protein is Uridine kinase.